Reading from the N-terminus, the 727-residue chain is Catalase-peroxidase (727 aa).

The segment at 1–21 (MDAKVEDNIAGKCPMGHGRGP) is disordered. Residues 95-217 (WHAAGTYRIT…LGAVQMGLIY (123 aa)) constitute a cross-link (tryptophyl-tyrosyl-methioninium (Trp-Tyr) (with M-243)). His-96 functions as the Proton acceptor in the catalytic mechanism. Positions 217–243 (YVNPEGPNGNPDPLASARDIRETFARM) form a cross-link, tryptophyl-tyrosyl-methioninium (Tyr-Met) (with W-95). His-258 contributes to the heme b binding site.

This sequence belongs to the peroxidase family. Peroxidase/catalase subfamily. Homodimer or homotetramer. Heme b is required as a cofactor. Post-translationally, formation of the three residue Trp-Tyr-Met cross-link is important for the catalase, but not the peroxidase activity of the enzyme.

It catalyses the reaction H2O2 + AH2 = A + 2 H2O. The catalysed reaction is 2 H2O2 = O2 + 2 H2O. In terms of biological role, bifunctional enzyme with both catalase and broad-spectrum peroxidase activity. Important for stationary phase survival. This chain is Catalase-peroxidase, found in Caulobacter vibrioides (strain ATCC 19089 / CIP 103742 / CB 15) (Caulobacter crescentus).